The following is a 387-amino-acid chain: Cytochrome b (387 aa).

Residues 32–52 traverse the membrane as a helical segment; that stretch reads LGSLLGLCLVIQIASGVFLAM. Positions 82 and 96 each coordinate heme b. Transmembrane regions (helical) follow at residues 85–105, 116–136, 151–171, 179–199, 225–245, 289–309, 324–344, and 350–370; these read GASFFFICMYLHIGKALYYGS, IGVVIFILTMAIAFMGYCLVY, LSAIPFIGNDIVPFIWGGFSV, FFALHFLLPFILAALVCMHLM, FIFKDLITVFVFLLIFSLFVF, LGGVIAMFGAILILLSLPYTD, LAFYLFVFNFILLGNLGQLHV, and QLGQFATAYYFAHYIIVVPVI. Residues H183 and H197 each contribute to the heme b site.

It belongs to the cytochrome b family. Component of the ubiquinol-cytochrome c oxidoreductase (cytochrome b-c1 complex, complex III, CIII), a multisubunit enzyme composed of 10 subunits. The complex is composed of 3 respiratory subunits cytochrome b (COB), cytochrome c1 (CYT1) and Rieske protein (RIP1), 2 core protein subunits COR1 and QCR2, and 5 low-molecular weight protein subunits QCR6, QCR7, QCR8, QCR9 and QCR10. The complex exists as an obligatory dimer and forms supercomplexes (SCs) in the inner mitochondrial membrane with a monomer or a dimer of cytochrome c oxidase (complex IV, CIV), resulting in 2 different assemblies (supercomplexes III(2)IV and III(2)IV(2)). The cofactor is heme b.

The protein localises to the mitochondrion inner membrane. Its function is as follows. Component of the ubiquinol-cytochrome c oxidoreductase, a multisubunit transmembrane complex that is part of the mitochondrial electron transport chain which drives oxidative phosphorylation. The complex plays an important role in the uptake of multiple carbon sources present in different host niches. In Candida albicans (strain SC5314 / ATCC MYA-2876) (Yeast), this protein is Cytochrome b.